A 452-amino-acid polypeptide reads, in one-letter code: Retinoid-inducible serine carboxypeptidase (452 aa).

An N-terminal signal peptide occupies residues 1 to 28 (MELSRRICLVRLWLLLLSFLLGFSAGSA). Asn-64, Asn-102, and Asn-126 each carry an N-linked (GlcNAc...) asparagine glycan. The active site involves Ser-167. 2 N-linked (GlcNAc...) asparagine glycosylation sites follow: Asn-192 and Asn-362. Catalysis depends on residues Asp-371 and His-431.

This sequence belongs to the peptidase S10 family.

It is found in the secreted. Its function is as follows. May be involved in vascular wall and kidney homeostasis. The chain is Retinoid-inducible serine carboxypeptidase (Scpep1) from Mus musculus (Mouse).